The following is a 373-amino-acid chain: MTEVLWPAVPNGTDAAFLAGPGSSWGNSTVASTAAVSSSFKCALTKTGFQFYYLPAVYILVFIIGFLGNSVAIWMFVFHMKPWSGISVYMFNLALADFLYVLTLPALIFYYFNKTDWIFGDAMCKLQRFIFHVNLYGSILFLTCISAHRYSGVVYPLKSLGRLKKKNAICISVLVWLIVVVAISPILFYSGTGVRKNKTITCYDTTSDEYLRSYFIYSMCTTVAMFCVPLVLILGCYGLIVRALIYKDLDNSPLRRKSIYLVIIVLTVFAVSYIPFHVMKTMNLRARLDFQTPAMCAFNDRVYATYQVTRGLASLNSCVDPILYFLAGDTFRRRLSRATRKASRRSEANLQSKSEDMTLNILPEFKQNGDTSL.

Residues 1–51 (MTEVLWPAVPNGTDAAFLAGPGSSWGNSTVASTAAVSSSFKCALTKTGFQF) lie on the Extracellular side of the membrane. N-linked (GlcNAc...) asparagine glycans are attached at residues Asn11 and Asn27. Intrachain disulfides connect Cys42/Cys296 and Cys124/Cys202. Residue Lys46 participates in ADP binding. A helical membrane pass occupies residues 52–74 (YYLPAVYILVFIIGFLGNSVAIW). Over 75 to 87 (MFVFHMKPWSGIS) the chain is Cytoplasmic. Residues 88–109 (VYMFNLALADFLYVLTLPALIF) form a helical membrane-spanning segment. Topologically, residues 110 to 125 (YYFNKTDWIFGDAMCK) are extracellular. N-linked (GlcNAc...) asparagine glycosylation is present at Asn113. The helical transmembrane segment at 126–147 (LQRFIFHVNLYGSILFLTCISA) threads the bilayer. Residues 148-166 (HRYSGVVYPLKSLGRLKKK) are Cytoplasmic-facing. Residues 167–188 (NAICISVLVWLIVVVAISPILF) form a helical membrane-spanning segment. Residues 189 to 214 (YSGTGVRKNKTITCYDTTSDEYLRSY) lie on the Extracellular side of the membrane. Asn197 is a glycosylation site (N-linked (GlcNAc...) asparagine). Residue 203 to 205 (YDT) participates in ADP binding. The chain crosses the membrane as a helical span at residues 215 to 237 (FIYSMCTTVAMFCVPLVLILGCY). At 238 to 260 (GLIVRALIYKDLDNSPLRRKSIY) the chain is on the cytoplasmic side. The helical transmembrane segment at 261–284 (LVIIVLTVFAVSYIPFHVMKTMNL) threads the bilayer. Residues 283 to 287 (NLRAR), 303 to 306 (YATY), and Arg310 each bind ADP. Residues 285–303 (RARLDFQTPAMCAFNDRVY) are Extracellular-facing. Residues 304–325 (ATYQVTRGLASLNSCVDPILYF) form a helical membrane-spanning segment. Over 326 to 373 (LAGDTFRRRLSRATRKASRRSEANLQSKSEDMTLNILPEFKQNGDTSL) the chain is Cytoplasmic.

It belongs to the G-protein coupled receptor 1 family.

It is found in the cell membrane. With respect to regulation, ATP functions as antagonist and inhibits ADP-induced mobilization of Ca(2+). The P2Y1 receptor-specific antagonists A3P5PS, A3P5P and A2P5P inhibit downstream signaling mediated by mobilization of Ca(2+) from intracellular stores, and platelet shape changes in response to extracellular ADP. Its function is as follows. Receptor for extracellular adenine nucleotides such as ADP. In platelets, binding to ADP leads to mobilization of intracellular calcium ions via activation of phospholipase C, a change in platelet shape, and ultimately platelet aggregation. The polypeptide is P2Y purinoceptor 1 (P2RY1) (Homo sapiens (Human)).